Consider the following 1125-residue polypeptide: Telomerase reverse transcriptase (1125 aa).

The interval 1–234 (MPRAPRCRAV…ARRRRSSARG (234 aa)) is RNA-interacting domain 1. The GQ motif stretch occupies residues 58–199 (VPWDAQPPPA…RQVGGTRAGF (142 aa)). Positions 137 to 141 (WGLLL) are required for regulating specificity for telomeric DNA and for processivity for primer elongation. The segment at 186 to 308 (RRPTRQVGGT…WRLSPSEGEP (123 aa)) is disordered. A compositionally biased stretch (basic residues) spans 224-243 (GARRRRSSARGRLPPAKRPR). The Bipartite nuclear localization signal motif lies at 226–244 (RRRRSSARGRLPPAKRPRR). Residue serine 231 is modified to Phosphoserine; by PKB/AKT1. The segment at 235–312 (RLPPAKRPRR…PSEGEPGAGA (78 aa)) is linker. 2 stretches are compositionally biased toward basic and acidic residues: residues 244–253 (RGLEPGRDLE) and 269–279 (DAAEAKSRKGD). Residues 290–531 (GERGVGSASW…VPAAEHRQRE (242 aa)) form a required for oligomerization region. The tract at residues 313 to 543 (CAETKRFLYC…LGRFLHWLMG (231 aa)) is RNA-interacting domain 2. The TFLY; involved in RNA binding signature appears at 316-321 (TKRFLY). Residues 364–514 (PRRPRRLPAR…MKVQDCAWLR (151 aa)) are QFP motif. Residues 385–405 (LGNHARSPYGALLRAHCPLPA) form a CP motif region. Serine 450 is modified (phosphoserine; by DYRK2). The Reverse transcriptase domain maps to 598–928 (EVRQHQEARP…CLFPWCGLLL (331 aa)). Residue tyrosine 700 is modified to Phosphotyrosine; by SRC-type Tyr-kinases. Mg(2+)-binding residues include aspartate 705, aspartate 861, and aspartate 862. A required for oligomerization region spans residues 907-921 (LGGAAPLQLPAHCLF). The interval 923–927 (WCGLL) is primer grip sequence. The tract at residues 929–1125 (DTRTLEVHGD…LTADFKTILD (197 aa)) is CTE.

The protein belongs to the reverse transcriptase family. Telomerase subfamily. Catalytic component of the telomerase holoenzyme complex composed of one molecule of TERT, one molecule of WRAP53/TCAB1, two molecules of H/ACA ribonucleoprotein complex subunits DKC1, NOP10, NHP2 and GAR1, and a telomerase RNA template component (TERC). The telomerase holoenzyme complex is associated with TEP1, SMG6/EST1A and POT1. The molecular chaperone HSP90/P23 complex is required for correct assembly and stabilization of the active telomerase. Interacts directly with HSP90A and PTGES3. Interacts with HSPA1A; the interaction occurs in the absence of TERC and dissociates once the complex has formed. Interacts with RAN; the interaction promotes nuclear export of TERT. Interacts with XPO1. Interacts with PTPN11; the interaction retains TERT in the nucleus. Interacts with NCL (via RRM1 and C-terminal RRM4/Arg/Gly-rich domains); the interaction is important for nucleolar localization of TERT. Interacts with SMARCA4 (via the bromodomain); the interaction regulates Wnt-mediated signaling. Interacts with MCRS1 (isoform MCRS2); the interaction inhibits in vitro telomerase activity. Interacts with PIF1; the interaction has no effect on the elongation activity of TERT. Interacts with PML; the interaction recruits TERT to PML bodies and inhibits telomerase activity. Interacts with GNL3L. Interacts with isoform 1 and isoform 2 of NVL. Interacts with DHX36. Interacts with ATF7. Post-translationally, phosphorylation at Tyr-700 under oxidative stress leads to translocation of TERT to the cytoplasm and reduces its antiapoptotic activity. Dephosphorylated by SHP2/PTPN11 leading to nuclear retention. Phosphorylation at Ser-231 by the AKT pathway promotes nuclear location. Phosphorylation at the G2/M phase at Ser-450 by DYRK2 promotes ubiquitination by the EDVP complex and degradation. Ubiquitinated by the EDVP complex, a E3 ligase complex following phosphorylation at Ser-450 by DYRK2. Ubiquitinated leads to proteasomal degradation.

The protein resides in the nucleus. The protein localises to the nucleolus. It is found in the nucleoplasm. Its subcellular location is the chromosome. It localises to the telomere. The protein resides in the cytoplasm. The protein localises to the PML body. It catalyses the reaction DNA(n) + a 2'-deoxyribonucleoside 5'-triphosphate = DNA(n+1) + diphosphate. In terms of biological role, telomerase is a ribonucleoprotein enzyme essential for the replication of chromosome termini in most eukaryotes. Active in progenitor and cancer cells. Inactive, or very low activity, in normal somatic cells. Catalytic component of the teleromerase holoenzyme complex whose main activity is the elongation of telomeres by acting as a reverse transcriptase that adds simple sequence repeats to chromosome ends by copying a template sequence within the RNA component of the enzyme. Catalyzes the RNA-dependent extension of 3'-chromosomal termini with the 6-nucleotide telomeric repeat unit, 5'-TTAGGG-3'. The catalytic cycle involves primer binding, primer extension and release of product once the template boundary has been reached or nascent product translocation followed by further extension. More active on substrates containing 2 or 3 telomeric repeats. Telomerase activity is regulated by a number of factors including telomerase complex-associated proteins, chaperones and polypeptide modifiers. Modulates Wnt signaling. Plays important roles in aging and antiapoptosis. The polypeptide is Telomerase reverse transcriptase (TERT) (Bos taurus (Bovine)).